Reading from the N-terminus, the 154-residue chain is Myoglobin (154 aa).

The Globin domain occupies 2–148 (GLSDGEWQLV…FRNDIAAKYK (147 aa)). Ser-4 carries the post-translational modification Phosphoserine. His-65 provides a ligand contact to nitrite. An O2-binding site is contributed by His-65. Thr-68 bears the Phosphothreonine mark. His-94 is a heme b binding site.

This sequence belongs to the globin family. In terms of assembly, monomeric.

The protein localises to the cytoplasm. The protein resides in the sarcoplasm. It carries out the reaction Fe(III)-heme b-[protein] + nitric oxide + H2O = Fe(II)-heme b-[protein] + nitrite + 2 H(+). The enzyme catalyses H2O2 + AH2 = A + 2 H2O. Monomeric heme protein which primary function is to store oxygen and facilitate its diffusion within muscle tissues. Reversibly binds oxygen through a pentacoordinated heme iron and enables its timely and efficient release as needed during periods of heightened demand. Depending on the oxidative conditions of tissues and cells, and in addition to its ability to bind oxygen, it also has a nitrite reductase activity whereby it regulates the production of bioactive nitric oxide. Under stress conditions, like hypoxia and anoxia, it also protects cells against reactive oxygen species thanks to its pseudoperoxidase activity. The chain is Myoglobin (MB) from Lutra lutra (European river otter).